The following is a 475-amino-acid chain: Ribulose bisphosphate carboxylase large chain (475 aa).

Positions 1 to 2 (MA) are excised as a propeptide. Residue P3 is modified to N-acetylproline. K14 bears the N6,N6,N6-trimethyllysine mark. Residues N123 and T173 each coordinate substrate. K175 (proton acceptor) is an active-site residue. Substrate is bound at residue K177. Positions 201, 203, and 204 each coordinate Mg(2+). K201 bears the N6-carboxylysine mark. The Proton acceptor role is filled by H294. R295, H327, and S379 together coordinate substrate.

This sequence belongs to the RuBisCO large chain family. Type I subfamily. Heterohexadecamer of 8 large chains and 8 small chains; disulfide-linked. The disulfide link is formed within the large subunit homodimers. Mg(2+) serves as cofactor. In terms of processing, the disulfide bond which can form in the large chain dimeric partners within the hexadecamer appears to be associated with oxidative stress and protein turnover.

It is found in the plastid. It localises to the chloroplast. It catalyses the reaction 2 (2R)-3-phosphoglycerate + 2 H(+) = D-ribulose 1,5-bisphosphate + CO2 + H2O. The catalysed reaction is D-ribulose 1,5-bisphosphate + O2 = 2-phosphoglycolate + (2R)-3-phosphoglycerate + 2 H(+). RuBisCO catalyzes two reactions: the carboxylation of D-ribulose 1,5-bisphosphate, the primary event in carbon dioxide fixation, as well as the oxidative fragmentation of the pentose substrate in the photorespiration process. Both reactions occur simultaneously and in competition at the same active site. The chain is Ribulose bisphosphate carboxylase large chain from Oedogonium cardiacum (Filamentous green alga).